An 881-amino-acid chain; its full sequence is Putative cation exchanger C521.04c (881 aa).

The segment covering 1–19 (MSQPADINQSESSAETITQ) has biased composition (polar residues). 2 disordered regions span residues 1 to 39 (MSQP…EQNL) and 52 to 142 (ADAT…LRSE). Positions 63–77 (NDRDIYSPREIDQYT) are enriched in basic and acidic residues. Residues 83-95 (RTDPSTSTISNAR) are compositionally biased toward polar residues. The span at 99-113 (RNSVSRLSRSSSNVR) shows a compositional bias: low complexity. Phosphoserine is present on S129. The next 8 helical transmembrane spans lie at 200–220 (IWLI…YIFF), 329–349 (LIIA…IFFV), 407–427 (IYII…FGFF), 438–458 (VFLF…IGMA), 471–491 (GAFI…SVAL), 504–524 (IGSI…AGAI), 537–557 (GATS…TMLF), and 594–614 (LPFT…GLWF). Residues 641–717 (VGEPVNQDTA…SQNSHGDDAP (77 aa)) form a disordered region. Residues 646-657 (NQDTAGNMSDSS) are compositionally biased toward polar residues. The span at 678-688 (SSGLSSNGSEN) shows a compositional bias: low complexity. 5 consecutive transmembrane segments (helical) span residues 726-746 (IILL…VEHV), 762-782 (LTLF…SFAL), 794-814 (SAYA…YSLF), 828-848 (LFTM…VFLL), and 859-879 (YFKG…FTFF).

This sequence belongs to the Ca(2+):cation antiporter (CaCA) (TC 2.A.19) family.

Its subcellular location is the endoplasmic reticulum membrane. In terms of biological role, putative cation exchanger. This is Putative cation exchanger C521.04c from Schizosaccharomyces pombe (strain 972 / ATCC 24843) (Fission yeast).